The following is a 723-amino-acid chain: Zinc finger protein 750 (723 aa).

The CCHC-type zinc finger occupies 25–51 (YKCFQCPFTCNEKSHLFNHMKYGLCKN). Residues C27, C30, H43, and C49 each contribute to the Zn(2+) site. 5 disordered regions span residues 64 to 91 (KCPK…SKSV), 132 to 153 (LHRA…QPAL), 359 to 427 (ASSP…SQTC), 466 to 630 (PAQA…SEEQ), and 650 to 723 (RVGD…ARVS). The span at 67 to 91 (KSNSLDPKQTNQPDATAKPASSKSV) shows a compositional bias: polar residues. Residues 360–369 (SSPSRLNPSD) show a composition bias toward polar residues. Residues 370–397 (PNRKHVEFESPIPEAKDSSKAGQRDTEG) are compositionally biased toward basic and acidic residues. Residues 470-482 (AETTAESPVSLNV) show a composition bias toward polar residues. A compositionally biased stretch (low complexity) spans 500–509 (AAPSSPDDSS). Residues 530-545 (PTYQGSPQAETASFSE) show a composition bias toward polar residues. Low complexity-rich tracts occupy residues 563 to 582 (APRP…AAVP) and 606 to 616 (GDGAPPTGPGE). The span at 666 to 678 (DTPTLSSMESQEA) shows a compositional bias: polar residues.

In terms of tissue distribution, expressed in the skin, prostate, lung, placenta and thymus, and at low level in T-cells. Not expressed in peripheral blood leukocytes, pancreas and brain. Clearly expressed in primary keratinocytes but not in fibroblasts.

The protein resides in the nucleus. In terms of biological role, transcription factor involved in epidermis differentiation. Required for terminal epidermal differentiation: acts downstream of p63/TP63 and activates expression of late epidermal differentiation genes. Specifically binds to the promoter of KLF4 and promotes its expression. This is Zinc finger protein 750 (ZNF750) from Homo sapiens (Human).